Consider the following 420-residue polypeptide: Polymerase delta-interacting protein 3 (420 aa).

A2 is subject to N-acetylalanine. S5 carries the post-translational modification Phosphoserine. R33 bears the Omega-N-methylarginine mark. S127 bears the Phosphoserine mark. The residue at position 140 (T140) is a Phosphothreonine. Residue K200 forms a Glycyl lysine isopeptide (Lys-Gly) (interchain with G-Cter in SUMO2) linkage. S215 and S217 each carry phosphoserine. K223 participates in a covalent cross-link: Glycyl lysine isopeptide (Lys-Gly) (interchain with G-Cter in SUMO2). The residue at position 244 (S244) is a Phosphoserine. A Glycyl lysine isopeptide (Lys-Gly) (interchain with G-Cter in SUMO2) cross-link involves residue K248. The interval 256-277 (TLVNKEEPPKELPPAEPVLSPL) is disordered. S275 bears the Phosphoserine mark. Residues 280-351 (TKMTVNNLHP…QPMKCNLHMN (72 aa)) form the RRM domain. Residues 369 to 394 (PSVKKESELPRRGNPASSNPPAEVDP) form a disordered region. Positions 370 to 379 (SVKKESELPR) are enriched in basic and acidic residues. Residue K372 forms a Glycyl lysine isopeptide (Lys-Gly) (interchain with G-Cter in SUMO2) linkage. Phosphoserine is present on S385. A Glycyl lysine isopeptide (Lys-Gly) (interchain with G-Cter in SUMO2) cross-link involves residue K417.

Interacts with POLD2. Interacts with NCBP1 and EIF4A3. Associates with the multiprotein exon junction complex (EJC). Interacts with RPS6KB1 (activated). Interacts with ERH. Interacts with THOC2, DDX39B and ZC3H11A; the interactions are ATP-dependent and indicative for an association with the TREX complex.

It is found in the nucleus. The protein localises to the nucleus speckle. It localises to the cytoplasm. Functionally, is involved in regulation of translation. Is preferentially associated with CBC-bound spliced mRNA-protein complexes during the pioneer round of mRNA translation. Contributes to enhanced translational efficiency of spliced over nonspliced mRNAs. Recruits activated ribosomal protein S6 kinase beta-1 I/RPS6KB1 to newly synthesized mRNA. Involved in nuclear mRNA export; probably mediated by association with the TREX complex. This Mus musculus (Mouse) protein is Polymerase delta-interacting protein 3 (Poldip3).